A 97-amino-acid polypeptide reads, in one-letter code: YcgL domain-containing protein PA14_47450 (97 aa).

The 85-residue stretch at 3–87 (RICSVYKSPR…GEEEYIEHLP (85 aa)) folds into the YcgL domain.

In Pseudomonas aeruginosa (strain UCBPP-PA14), this protein is YcgL domain-containing protein PA14_47450.